Here is a 331-residue protein sequence, read N- to C-terminus: MAKMYYDSDCNLKLLEGKTVAVIGYGSQGHAHAQNLKDSGVNVIVGLTPSSARRKQVEADGLKAYDTAEAAKMADIIMILVPDEKQAAMYEESIAQNLEAGNILMFAHGFNINFKQIVPPADVDVIMVAPKGPGHTVRSQYKEGRGVPALIAVEKDASGKAKEYALAYASGIGAGRAGILETTFREETETDLFGEQAVLCGGVTELMKAGFETLVAAGYQPEIAYFECIHEMKLIVDLINQGGFGEMRYSISDTAEYGDYVTGKRIITDETRKEMKKVLKEIQDGKFAANWIIENKAAGRANFISMRRNESEHQLETVGAELRKMMSWLKK.

The 181-residue stretch at 2-182 (AKMYYDSDCN…GAGRAGILET (181 aa)) folds into the KARI N-terminal Rossmann domain. NADP(+) contacts are provided by residues 25–28 (YGSQ), Ser51, and 83–86 (DEKQ). The active site involves His108. Residue Gly134 coordinates NADP(+). One can recognise a KARI C-terminal knotted domain in the interval 183–329 (TFREETETDL…AELRKMMSWL (147 aa)). Mg(2+) contacts are provided by Asp191, Glu195, Glu227, and Glu231. A substrate-binding site is contributed by Ser252.

The protein belongs to the ketol-acid reductoisomerase family. The cofactor is Mg(2+).

The enzyme catalyses (2R)-2,3-dihydroxy-3-methylbutanoate + NADP(+) = (2S)-2-acetolactate + NADPH + H(+). The catalysed reaction is (2R,3R)-2,3-dihydroxy-3-methylpentanoate + NADP(+) = (S)-2-ethyl-2-hydroxy-3-oxobutanoate + NADPH + H(+). It functions in the pathway amino-acid biosynthesis; L-isoleucine biosynthesis; L-isoleucine from 2-oxobutanoate: step 2/4. It participates in amino-acid biosynthesis; L-valine biosynthesis; L-valine from pyruvate: step 2/4. Functionally, involved in the biosynthesis of branched-chain amino acids (BCAA). Catalyzes an alkyl-migration followed by a ketol-acid reduction of (S)-2-acetolactate (S2AL) to yield (R)-2,3-dihydroxy-isovalerate. In the isomerase reaction, S2AL is rearranged via a Mg-dependent methyl migration to produce 3-hydroxy-3-methyl-2-ketobutyrate (HMKB). In the reductase reaction, this 2-ketoacid undergoes a metal-dependent reduction by NADPH to yield (R)-2,3-dihydroxy-isovalerate. The chain is Ketol-acid reductoisomerase (NADP(+)) from Ruminiclostridium cellulolyticum (strain ATCC 35319 / DSM 5812 / JCM 6584 / H10) (Clostridium cellulolyticum).